A 342-amino-acid chain; its full sequence is Heat-inducible transcription repressor HrcA (342 aa).

This sequence belongs to the HrcA family.

Negative regulator of class I heat shock genes (grpE-dnaK-dnaJ and groELS operons). Prevents heat-shock induction of these operons. This is Heat-inducible transcription repressor HrcA from Leptospira interrogans serogroup Icterohaemorrhagiae serovar copenhageni (strain Fiocruz L1-130).